The chain runs to 238 residues: Transcriptional activator HAC1 (238 aa).

A disordered region spans residues 1-39; sequence MEMTDFELTSNSQSNLAIPTNFKSTLPPRKRAKTKEEKE. Positions 7–24 are enriched in polar residues; it reads ELTSNSQSNLAIPTNFKS. The region spanning 39-102 is the bZIP domain; the sequence is EQRRIERILR…LTCSHDAFVA (64 aa). The segment at 41–61 is basic motif; that stretch reads RRIERILRNRRAAHQSREKKR. A leucine-zipper region spans residues 67 to 74; that stretch reads LERKCSLL. Residues 115-152 form a disordered region; it reads GASLDTRASSHSSSDTFTPSPLNCTMEPATLSPKSMRD. Residues 117–134 show a composition bias toward low complexity; it reads SLDTRASSHSSSDTFTPS.

Belongs to the bZIP family. As to quaternary structure, homodimer.

Its subcellular location is the nucleus. Transcriptional activator involved in the unfolded protein response (UPR) pathway. Recognizes and binds to the UPR element (UPRE) in the promoter of UPR-regulated genes such as KAR2, PDI1, EUG1 and FKB2. Increases the synthesis of endoplasmic reticulum-resident proteins required for protein folding as well as components of the secretory pathway. In Saccharomyces cerevisiae (strain ATCC 204508 / S288c) (Baker's yeast), this protein is Transcriptional activator HAC1 (HAC1).